Reading from the N-terminus, the 514-residue chain is Bifunctional purine biosynthesis protein PurH (514 aa).

The 142-residue stretch at 1-142 (MLALLSVSDK…KNFRHVSVVV (142 aa)) folds into the MGS-like domain.

Belongs to the PurH family.

It carries out the reaction (6R)-10-formyltetrahydrofolate + 5-amino-1-(5-phospho-beta-D-ribosyl)imidazole-4-carboxamide = 5-formamido-1-(5-phospho-D-ribosyl)imidazole-4-carboxamide + (6S)-5,6,7,8-tetrahydrofolate. The catalysed reaction is IMP + H2O = 5-formamido-1-(5-phospho-D-ribosyl)imidazole-4-carboxamide. It functions in the pathway purine metabolism; IMP biosynthesis via de novo pathway; 5-formamido-1-(5-phospho-D-ribosyl)imidazole-4-carboxamide from 5-amino-1-(5-phospho-D-ribosyl)imidazole-4-carboxamide (10-formyl THF route): step 1/1. It participates in purine metabolism; IMP biosynthesis via de novo pathway; IMP from 5-formamido-1-(5-phospho-D-ribosyl)imidazole-4-carboxamide: step 1/1. The protein is Bifunctional purine biosynthesis protein PurH of Myxococcus xanthus (strain DK1622).